Reading from the N-terminus, the 174-residue chain is Cytochrome c-type biogenesis protein CcmE (174 aa).

The Cytoplasmic portion of the chain corresponds to 1-8 (MNPRRKSR). Residues 9–29 (LSVVLFIFLGISVASALVLYA) traverse the membrane as a helical; Signal-anchor for type II membrane protein segment. Topologically, residues 30–174 (LRQNIDLFYT…QEKQFKEGNQ (145 aa)) are periplasmic. Residues H131 and Y135 each contribute to the heme site. The disordered stretch occupies residues 149–174 (KPMGISDLKNESDRDRQEKQFKEGNQ). Basic and acidic residues predominate over residues 156-174 (LKNESDRDRQEKQFKEGNQ).

This sequence belongs to the CcmE/CycJ family.

It localises to the cell inner membrane. Heme chaperone required for the biogenesis of c-type cytochromes. Transiently binds heme delivered by CcmC and transfers the heme to apo-cytochromes in a process facilitated by CcmF and CcmH. In Histophilus somni (strain 129Pt) (Haemophilus somnus), this protein is Cytochrome c-type biogenesis protein CcmE.